Reading from the N-terminus, the 468-residue chain is ATP synthase subunit beta (468 aa).

155–162 (GGAGVGKT) provides a ligand contact to ATP.

This sequence belongs to the ATPase alpha/beta chains family. As to quaternary structure, F-type ATPases have 2 components, CF(1) - the catalytic core - and CF(0) - the membrane proton channel. CF(1) has five subunits: alpha(3), beta(3), gamma(1), delta(1), epsilon(1). CF(0) has three main subunits: a(1), b(2) and c(9-12). The alpha and beta chains form an alternating ring which encloses part of the gamma chain. CF(1) is attached to CF(0) by a central stalk formed by the gamma and epsilon chains, while a peripheral stalk is formed by the delta and b chains.

It is found in the cell membrane. It carries out the reaction ATP + H2O + 4 H(+)(in) = ADP + phosphate + 5 H(+)(out). Produces ATP from ADP in the presence of a proton gradient across the membrane. The catalytic sites are hosted primarily by the beta subunits. In Streptococcus pyogenes serotype M1, this protein is ATP synthase subunit beta.